We begin with the raw amino-acid sequence, 901 residues long: Protein translocase subunit SecA (901 aa).

ATP-binding positions include Gln-85, Gly-103 to Thr-107, and Asp-510. The disordered stretch occupies residues Thr-847–Gln-901. Residues Arg-848 to Ser-866 show a composition bias toward polar residues. The Zn(2+) site is built by Cys-882, Cys-884, Cys-893, and His-894. Residues Lys-888 to Gln-901 show a composition bias toward basic residues.

It belongs to the SecA family. Monomer and homodimer. Part of the essential Sec protein translocation apparatus which comprises SecA, SecYEG and auxiliary proteins SecDF-YajC and YidC. Zn(2+) is required as a cofactor.

It is found in the cell inner membrane. It localises to the cytoplasm. The catalysed reaction is ATP + H2O + cellular proteinSide 1 = ADP + phosphate + cellular proteinSide 2.. Its function is as follows. Part of the Sec protein translocase complex. Interacts with the SecYEG preprotein conducting channel. Has a central role in coupling the hydrolysis of ATP to the transfer of proteins into and across the cell membrane, serving both as a receptor for the preprotein-SecB complex and as an ATP-driven molecular motor driving the stepwise translocation of polypeptide chains across the membrane. This is Protein translocase subunit SecA from Haemophilus influenzae (strain PittGG).